Here is a 209-residue protein sequence, read N- to C-terminus: Ribosomal RNA large subunit methyltransferase E (209 aa).

5 residues coordinate S-adenosyl-L-methionine: G63, W65, D83, D99, and D124. The active-site Proton acceptor is the K164.

This sequence belongs to the class I-like SAM-binding methyltransferase superfamily. RNA methyltransferase RlmE family.

It localises to the cytoplasm. It carries out the reaction uridine(2552) in 23S rRNA + S-adenosyl-L-methionine = 2'-O-methyluridine(2552) in 23S rRNA + S-adenosyl-L-homocysteine + H(+). Specifically methylates the uridine in position 2552 of 23S rRNA at the 2'-O position of the ribose in the fully assembled 50S ribosomal subunit. The polypeptide is Ribosomal RNA large subunit methyltransferase E (Shewanella oneidensis (strain ATCC 700550 / JCM 31522 / CIP 106686 / LMG 19005 / NCIMB 14063 / MR-1)).